A 367-amino-acid chain; its full sequence is Ribosome-binding ATPase YchF (367 aa).

The region spanning 2–258 (LSAGIVGLPN…LKLEQRQYFL (257 aa)) is the OBG-type G domain. 11 to 16 (NVGKST) contributes to the ATP binding site. Ser15 and Thr35 together coordinate Mg(2+). The TGS domain maps to 281-364 (NLWSFFTFGK…KDGDVCNFKF (84 aa)).

It belongs to the TRAFAC class OBG-HflX-like GTPase superfamily. OBG GTPase family. YchF/OLA1 subfamily. Mg(2+) serves as cofactor.

Functionally, ATPase that binds to both the 70S ribosome and the 50S ribosomal subunit in a nucleotide-independent manner. The sequence is that of Ribosome-binding ATPase YchF from Mycoplasma genitalium (strain ATCC 33530 / DSM 19775 / NCTC 10195 / G37) (Mycoplasmoides genitalium).